Consider the following 400-residue polypeptide: Probable peptidoglycan D,D-transpeptidase PenA (400 aa).

Residues 1–21 (NIDGKGQEGLELSREDSLRGE) are disordered. The active-site Acyl-ester intermediate is serine 128.

It belongs to the transpeptidase family. FtsI subfamily.

The protein resides in the cell inner membrane. The catalysed reaction is Preferential cleavage: (Ac)2-L-Lys-D-Ala-|-D-Ala. Also transpeptidation of peptidyl-alanyl moieties that are N-acyl substituents of D-alanine.. The protein operates within cell wall biogenesis; peptidoglycan biosynthesis. Functionally, catalyzes cross-linking of the peptidoglycan cell wall at the division septum. The chain is Probable peptidoglycan D,D-transpeptidase PenA from Neisseria flavescens.